We begin with the raw amino-acid sequence, 634 residues long: Chaperone protein dnaK2 (634 aa).

A Phosphothreonine; by autocatalysis modification is found at Thr197. Low complexity predominate over residues 601–620 (SAEASANAQAGPSSSSSSSS). The segment at 601 to 634 (SAEASANAQAGPSSSSSSSSGDDDVIDAEFSESK) is disordered. Residues 621–634 (GDDDVIDAEFSESK) are compositionally biased toward acidic residues.

The protein belongs to the heat shock protein 70 family.

Acts as a chaperone. The polypeptide is Chaperone protein dnaK2 (dnaK2) (Synechococcus elongatus (strain ATCC 33912 / PCC 7942 / FACHB-805) (Anacystis nidulans R2)).